Reading from the N-terminus, the 91-residue chain is MGPPRRVCRAGLLFVLLVALAAGDAGPRGEPPGEEGGRDGIGGARCETQNTGQMSAPGALVPFYVGMASMGVCIIAHVCQICQRLLAAGHA.

A signal peptide spans 1–23 (MGPPRRVCRAGLLFVLLVALAAG). Residues 23–48 (GDAGPRGEPPGEEGGRDGIGGARCET) form a disordered region. The Virion surface portion of the chain corresponds to 24–55 (DAGPRGEPPGEEGGRDGIGGARCETQNTGQMS). Residues 56 to 76 (APGALVPFYVGMASMGVCIIA) form a helical membrane-spanning segment. Residues 77–91 (HVCQICQRLLAAGHA) lie on the Intravirion side of the membrane.

It belongs to the herpesviridae glycoprotein N family. Interacts (via N-terminus) with gM (via N-terminus). The gM-gN heterodimer forms the gCII complex.

The protein localises to the virion membrane. The protein resides in the host membrane. Its subcellular location is the host Golgi apparatus. It is found in the host trans-Golgi network. Functionally, envelope glycoprotein necessary for proper maturation of gM and modulation of its membrane fusion activity. Also plays a critical role in virion morphogenesis. The polypeptide is Envelope glycoprotein N (Homo sapiens (Human)).